Here is a 497-residue protein sequence, read N- to C-terminus: Histone-lysine N-methyltransferase ASHR3 (497 aa).

The segment at 118–186 adopts a PHD-type zinc-finger fold; that stretch reads MVDCLVCHKP…QWRCVKCPMA (69 aa). The 44-residue stretch at 283–326 folds into the AWS domain; the sequence is DGVGCTNCGPNCDRSCVCRVQCISCSKGCSCPESCGNRPFRKEK. Residues 326–443 form the SET domain; the sequence is KKIKIVKTEH…AGEPLTYDYR (118 aa). Residues 449 to 465 enclose the Post-SET domain; it reads PEVKCNCGSENCQGYLG.

It belongs to the class V-like SAM-binding methyltransferase superfamily. Histone-lysine methyltransferase family. SET2 subfamily. Interacts with AMS/bHLH21 by its SET domain and PHD finger. Expressed in roots, flowers and buds, the anther and in stamen filaments.

Its subcellular location is the nucleus. The protein resides in the chromosome. The catalysed reaction is L-lysyl-[histone] + S-adenosyl-L-methionine = N(6)-methyl-L-lysyl-[histone] + S-adenosyl-L-homocysteine + H(+). Its function is as follows. Histone methyltransferase. Involved in stamen development. The sequence is that of Histone-lysine N-methyltransferase ASHR3 (ASHR3) from Arabidopsis thaliana (Mouse-ear cress).